We begin with the raw amino-acid sequence, 293 residues long: Diaminopimelate epimerase (293 aa).

Residues N17, Q47, and N67 each contribute to the substrate site. C76 functions as the Proton donor in the catalytic mechanism. Substrate contacts are provided by residues 77–78 (GN), N164, N197, and 215–216 (ER). Residue C224 is the Proton acceptor of the active site. Residue 225–226 (GS) coordinates substrate.

It belongs to the diaminopimelate epimerase family. As to quaternary structure, homodimer.

It localises to the cytoplasm. The catalysed reaction is (2S,6S)-2,6-diaminopimelate = meso-2,6-diaminopimelate. The protein operates within amino-acid biosynthesis; L-lysine biosynthesis via DAP pathway; DL-2,6-diaminopimelate from LL-2,6-diaminopimelate: step 1/1. In terms of biological role, catalyzes the stereoinversion of LL-2,6-diaminopimelate (L,L-DAP) to meso-diaminopimelate (meso-DAP), a precursor of L-lysine and an essential component of the bacterial peptidoglycan. The polypeptide is Diaminopimelate epimerase (Rhodopseudomonas palustris (strain BisB5)).